Consider the following 649-residue polypeptide: Phospholipase A1 PLIP1, chloroplastic (649 aa).

Residues 1-67 constitute a chloroplast transit peptide; sequence MAFNTAMAST…NNRILAVSVR (67 aa). A GXSXG motif is present at residues 420 to 424; the sequence is GHSLG. Ser422 acts as the Acyl-ester intermediate in catalysis. Active-site charge relay system residues include Asp483 and His593.

Belongs to the AB hydrolase superfamily. Lipase family.

It is found in the plastid. It localises to the chloroplast thylakoid membrane. It catalyses the reaction a 1,2-diacyl-sn-glycero-3-phosphocholine + H2O = a 2-acyl-sn-glycero-3-phosphocholine + a fatty acid + H(+). The enzyme catalyses a 1,2-diacyl-3-O-(beta-D-galactosyl)-sn-glycerol + 2 H2O = 3-beta-D-galactosyl-sn-glycerol + 2 a fatty acid + 2 H(+). Functionally, sn-1-specific phospholipase A1 involved in seed oil biosynthesis. Hydrolyzes polyunsaturated acyl groups from a unique chloroplast-specific phosphatidylglycerol (PG) that contains 16:1 delta 3-trans as its second acyl group. The polyunsaturated acyl groups released by PLIP1 are exported from the chloroplast, reincorporated into phosphatidylcholine (PC), and ultimately enter seed triacylglycerol (TAG). In vitro, possesses broad substrate specificity. Can hydrolyze the galactolipid monogalactosyldiacylglycerol (MGDG), and the phoshpolipids phosphatidylcholine (PC), phosphatidylethanolamine (PE), phosphatidic acid (PA), phosphatidylserine (PS) phosphatidylglycerol (PG) and phosphatidylinositol (PI). The protein is Phospholipase A1 PLIP1, chloroplastic of Arabidopsis thaliana (Mouse-ear cress).